A 346-amino-acid polypeptide reads, in one-letter code: Large ribosomal subunit protein uL10 (346 aa).

Positions 307–346 are disordered; it reads AAAVAKEPEKKEEVKEEEEEEEEEDHSEEDGMAGLGSLFG. The span at 321–337 shows a compositional bias: acidic residues; it reads KEEEEEEEEEDHSEEDG.

The protein belongs to the universal ribosomal protein uL10 family. As to quaternary structure, part of the 50S ribosomal subunit. Forms part of the ribosomal stalk which helps the ribosome interact with GTP-bound translation factors. Forms both a pentameric L10(L12)2(L12)2 and heptameric L10(L12)2(L12)2(L12)2 complex, where L10 forms an elongated spine to which the L12 dimers bind in a sequential fashion. The proportion of heptameric complexes increases during cell growth.

Its function is as follows. Forms part of the ribosomal stalk, playing a central role in the interaction of the ribosome with GTP-bound translation factors. This is Large ribosomal subunit protein uL10 from Methanosarcina barkeri (strain Fusaro / DSM 804).